Here is a 178-residue protein sequence, read N- to C-terminus: Large ribosomal subunit protein uL6 (178 aa).

The protein belongs to the universal ribosomal protein uL6 family. As to quaternary structure, part of the 50S ribosomal subunit.

Its function is as follows. This protein binds to the 23S rRNA, and is important in its secondary structure. It is located near the subunit interface in the base of the L7/L12 stalk, and near the tRNA binding site of the peptidyltransferase center. The polypeptide is Large ribosomal subunit protein uL6 (Coxiella burnetii (strain CbuG_Q212) (Coxiella burnetii (strain Q212))).